Here is a 337-residue protein sequence, read N- to C-terminus: Beta-ketoacyl-[acyl-carrier-protein] synthase III (337 aa).

Catalysis depends on residues Cys-119 and His-260. Positions 261–265 are ACP-binding; it reads QANQR. Asn-290 is an active-site residue.

It belongs to the thiolase-like superfamily. FabH family. In terms of assembly, homodimer.

It localises to the cytoplasm. The enzyme catalyses malonyl-[ACP] + acetyl-CoA + H(+) = 3-oxobutanoyl-[ACP] + CO2 + CoA. The protein operates within lipid metabolism; fatty acid biosynthesis. Its function is as follows. Catalyzes the condensation reaction of fatty acid synthesis by the addition to an acyl acceptor of two carbons from malonyl-ACP. Catalyzes the first condensation reaction which initiates fatty acid synthesis and may therefore play a role in governing the total rate of fatty acid production. Possesses both acetoacetyl-ACP synthase and acetyl transacylase activities. Its substrate specificity determines the biosynthesis of branched-chain and/or straight-chain of fatty acids. The sequence is that of Beta-ketoacyl-[acyl-carrier-protein] synthase III from Synechococcus sp. (strain WH7803).